The following is a 136-amino-acid chain: Large ribosomal subunit protein uL16 (136 aa).

It belongs to the universal ribosomal protein uL16 family. Part of the 50S ribosomal subunit.

In terms of biological role, binds 23S rRNA and is also seen to make contacts with the A and possibly P site tRNAs. The protein is Large ribosomal subunit protein uL16 of Shewanella denitrificans (strain OS217 / ATCC BAA-1090 / DSM 15013).